We begin with the raw amino-acid sequence, 445 residues long: Selenocysteine lyase (445 aa).

Met1 carries the post-translational modification N-acetylmethionine. The segment at 1 to 28 (MEAAVAPGRDAPAPAASQPSGCGKHNSP) is disordered. Residue Ser129 is modified to Phosphoserine. Lys259 carries the post-translational modification N6-(pyridoxal phosphate)lysine. Cys388 functions as the S-selanylcysteine intermediate in the catalytic mechanism.

Belongs to the class-V pyridoxal-phosphate-dependent aminotransferase family. Homodimer. Requires pyridoxal 5'-phosphate as cofactor.

The protein localises to the cytoplasm. It is found in the cytosol. The catalysed reaction is L-selenocysteine + AH2 = hydrogenselenide + L-alanine + A + H(+). In terms of biological role, catalyzes the decomposition of L-selenocysteine to L-alanine and elemental selenium. The polypeptide is Selenocysteine lyase (SCLY) (Homo sapiens (Human)).